The sequence spans 1523 residues: Lysophospholipase nte1 (1523 aa).

At 1 to 66 the chain is on the cytoplasmic side; it reads MADGVTLVDS…LPPVPTTMAG (66 aa). The helical transmembrane segment at 67–87 threads the bilayer; sequence WIGWVFSFFFQVIPSVLYWVI. The Lumenal segment spans residues 88 to 109; the sequence is TFSTITLPTWLFTLFSMSLTFT. Residues 110 to 130 form a helical membrane-spanning segment; the sequence is MNFTTLLLIVLAMVSTISWFI. Residues 131 to 1523 lie on the Cytoplasmic side of the membrane; sequence RYRFLNMYSR…RTMAPRRASI (1393 aa). Disordered regions lie at residues 309 to 384 and 524 to 545; these read VPNS…KSVH and RAATVVTPESAPAEHDTYGVSP. Residues 370 to 382 are compositionally biased toward basic residues; sequence ESRKHSSRKRRKS. A nucleoside 3',5'-cyclic phosphate contacts are provided by residues 681–800 and 841–961; these read GGTS…GAVA and RLTS…IAQR. One can recognise a PNPLA domain in the interval 1220-1384; that stretch reads LVLGGGGARG…IDNLTVDHMK (165 aa). The GXGXXG signature appears at 1224 to 1229; sequence GGGARG. Positions 1251–1255 match the GXSXG motif; that stretch reads GTSIG. Ser-1253 serves as the catalytic Nucleophile. Asp-1371 serves as the catalytic Proton acceptor. The DGA/G signature appears at 1371 to 1373; sequence DGG. The disordered stretch occupies residues 1502 to 1523; that stretch reads LPEETEEKKKLQRTMAPRRASI.

It belongs to the NTE family.

The protein localises to the endoplasmic reticulum membrane. The catalysed reaction is a 1-acyl-sn-glycero-3-phosphocholine + H2O = sn-glycerol 3-phosphocholine + a fatty acid + H(+). Its activity is regulated as follows. Inhibited by organophosphorus esters. Intracellular phospholipase B that catalyzes the double deacylation of phosphatidylcholine (PC) to glycerophosphocholine (GroPCho). Plays an important role in membrane lipid homeostasis. Responsible for the rapid PC turnover in response to inositol, elevated temperatures, or when choline is present in the growth medium. The chain is Lysophospholipase nte1 (nte1) from Neosartorya fischeri (strain ATCC 1020 / DSM 3700 / CBS 544.65 / FGSC A1164 / JCM 1740 / NRRL 181 / WB 181) (Aspergillus fischerianus).